The sequence spans 1186 residues: ATP-dependent helicase/deoxyribonuclease subunit B (1186 aa).

The protein belongs to the helicase family. AddB/RexB type 2 subfamily. As to quaternary structure, heterodimer of AddA and RexB. Requires Mg(2+) as cofactor.

In terms of biological role, the heterodimer acts as both an ATP-dependent DNA helicase and an ATP-dependent, dual-direction single-stranded exonuclease. Recognizes the chi site generating a DNA molecule suitable for the initiation of homologous recombination. This subunit has 5' -&gt; 3' nuclease activity but not helicase activity. This is ATP-dependent helicase/deoxyribonuclease subunit B from Latilactobacillus sakei subsp. sakei (strain 23K) (Lactobacillus sakei subsp. sakei).